A 231-amino-acid chain; its full sequence is 7-cyano-7-deazaguanine synthase (231 aa).

8–18 (FSGGQDSTTCL) serves as a coordination point for ATP. Cys188, Cys197, Cys200, and Cys203 together coordinate Zn(2+).

This sequence belongs to the QueC family. Zn(2+) serves as cofactor.

It carries out the reaction 7-carboxy-7-deazaguanine + NH4(+) + ATP = 7-cyano-7-deazaguanine + ADP + phosphate + H2O + H(+). The protein operates within purine metabolism; 7-cyano-7-deazaguanine biosynthesis. In terms of biological role, catalyzes the ATP-dependent conversion of 7-carboxy-7-deazaguanine (CDG) to 7-cyano-7-deazaguanine (preQ(0)). The polypeptide is 7-cyano-7-deazaguanine synthase (Escherichia coli O127:H6 (strain E2348/69 / EPEC)).